A 191-amino-acid chain; its full sequence is Akirin-1 (191 aa).

A disordered region spans residues 17 to 70 (LLSPGSPKRRRCAPLPGPTPGLRPPDAEPPPLQMQTPPASLQQPAPPGSERRLP). A Phosphoserine modification is found at S22. Residues 23 to 28 (PKRRRC) carry the Nuclear localization signal motif. Pro residues predominate over residues 31–48 (LPGPTPGLRPPDAEPPPL). Residues 49-59 (QMQTPPASLQQ) show a composition bias toward polar residues. The residue at position 71 (T71) is a Phosphothreonine. The short motif at 188–191 (SYVS) is the SYVS motif element.

The protein belongs to the akirin family. As to expression, expressed in macrophages and satellite cells.

It is found in the nucleus. Its function is as follows. Molecular adapter that acts as a bridge between proteins, and which is involved skeletal muscle development. Functions as a signal transducer for MSTN during skeletal muscle regeneration and myogenesis. May regulate chemotaxis of both macrophages and myoblasts by reorganising actin cytoskeleton, leading to more efficient lamellipodia formation via a PI3 kinase dependent pathway. In contrast to AKIRIN2, not involved in nuclear import of proteasomes. The protein is Akirin-1 of Mus musculus (Mouse).